The sequence spans 118 residues: Small ribosomal subunit protein uS13 (118 aa).

Residues 91–118 (HRHSLPVRGQRTKTNARTRKGPRKPIRK) form a disordered region.

This sequence belongs to the universal ribosomal protein uS13 family. As to quaternary structure, part of the 30S ribosomal subunit. Forms a loose heterodimer with protein S19. Forms two bridges to the 50S subunit in the 70S ribosome.

In terms of biological role, located at the top of the head of the 30S subunit, it contacts several helices of the 16S rRNA. In the 70S ribosome it contacts the 23S rRNA (bridge B1a) and protein L5 of the 50S subunit (bridge B1b), connecting the 2 subunits; these bridges are implicated in subunit movement. Contacts the tRNAs in the A and P-sites. This is Small ribosomal subunit protein uS13 from Hahella chejuensis (strain KCTC 2396).